The sequence spans 362 residues: Glutaminyl-peptide cyclotransferase (362 aa).

The signal sequence occupies residues 1-35 (MAGSEDKRVVGTLHLLLLQATVLSLTAGNLSLVSA). N-linked (GlcNAc...) asparagine glycans are attached at residues asparagine 29 and asparagine 50. An intrachain disulfide couples cysteine 140 to cysteine 165. A Zn(2+)-binding site is contributed by aspartate 160. Glutamate 202 serves as the catalytic Proton acceptor. Glutamate 203 is a Zn(2+) binding site. The active-site Proton acceptor is the aspartate 249. Histidine 331 is a Zn(2+) binding site.

Belongs to the glutaminyl-peptide cyclotransferase family.

Its subcellular location is the secreted. It carries out the reaction N-terminal L-glutaminyl-[peptide] = N-terminal 5-oxo-L-prolyl-[peptide] + NH4(+). In terms of biological role, responsible for the biosynthesis of pyroglutamyl peptides. Has a bias against acidic and tryptophan residues adjacent to the N-terminal glutaminyl residue and a lack of importance of chain length after the second residue. In Mus musculus (Mouse), this protein is Glutaminyl-peptide cyclotransferase (Qpct).